Reading from the N-terminus, the 527-residue chain is Type 2 DNA topoisomerase 6 subunit B (527 aa).

Residues Asn-39, Asp-73, 94–95 (SK), 103–110 (GVFGLGLK), and Lys-421 contribute to the ATP site.

Belongs to the TOP6B family. As to quaternary structure, homodimer. Heterotetramer of two Top6A and two Top6B chains.

The catalysed reaction is ATP-dependent breakage, passage and rejoining of double-stranded DNA.. In terms of biological role, relaxes both positive and negative superturns and exhibits a strong decatenase activity. This chain is Type 2 DNA topoisomerase 6 subunit B, found in Pyrobaculum aerophilum (strain ATCC 51768 / DSM 7523 / JCM 9630 / CIP 104966 / NBRC 100827 / IM2).